We begin with the raw amino-acid sequence, 98 residues long: NADH-ubiquinone oxidoreductase chain 4L (98 aa).

The next 3 helical transmembrane spans lie at 1–21 (MTMV…GLLM), 29–49 (SLLC…VTIL), and 61–81 (IILL…LVMV).

It belongs to the complex I subunit 4L family. As to quaternary structure, core subunit of respiratory chain NADH dehydrogenase (Complex I) which is composed of 45 different subunits.

The protein localises to the mitochondrion inner membrane. The enzyme catalyses a ubiquinone + NADH + 5 H(+)(in) = a ubiquinol + NAD(+) + 4 H(+)(out). In terms of biological role, core subunit of the mitochondrial membrane respiratory chain NADH dehydrogenase (Complex I) which catalyzes electron transfer from NADH through the respiratory chain, using ubiquinone as an electron acceptor. Part of the enzyme membrane arm which is embedded in the lipid bilayer and involved in proton translocation. This is NADH-ubiquinone oxidoreductase chain 4L (MT-ND4L) from Neomonachus schauinslandi (Hawaiian monk seal).